The primary structure comprises 398 residues: Streptopain (398 aa).

Residues 1 to 27 (MNKKKLGIRLLSLLALGGFVLANPVFA) form the signal peptide. The propeptide occupies 28–145 (DQNFARNEKE…TTYAGTAEIK (118 aa)). Residue C192 is the Nucleophile of the active site. C192 carries the cysteine methyl disulfide; in zymogen form modification. A protein-binding residues include S282 and G339. H340 serves as the catalytic Proton acceptor. The interval 368 to 390 (RLDALNPSALGTGGGAGGFNGYQ) is C-terminal active site loop.

It belongs to the peptidase C10 family. As to quaternary structure, monomer. Post-translationally, the mature protease is derived from the precursor sequence by cleavage, either in cis via an autocatalytic mechanism, or in trans by mature SpeB or host proteases (trypsin, plasmin or subtilisin). Maturation can involve a number of protein cleavage intermediates. Mature SpeB probably plays the most important role in protein maturation in physiological conditions. In terms of processing, methylthiolation at Cys-192 of the inactive zymogen form is probably involved in the mechanism of secretion of the proteinase into the culture fluid.

The protein localises to the secreted. It is found in the host extracellular space. It localises to the host cytoplasm. It catalyses the reaction Preferential cleavage with hydrophobic residues at P2, P1 and P1'.. Its activity is regulated as follows. Synthesized as an inactive zymogen to protect the intracellular components of the bacteria from proteolytic activity during protein production. Once secreted into the extracellular milieu, cleaved into the active protease: maturation can be mediated in cis by autocatalytic cleavage, or in trans by mature SpeB or host proteases. Protease activity is strongly inhibited by zinc and copper, which prevent its maturation into an active protease: inhibition by metal ions may be required to prevent proteolysis of streptococcal proteins. In terms of biological role, cysteine protease that acts as a key streptococcal virulence factor by cleaving host proteins involved in immune response. Triggers inflammation by mediating cleavage of host proteins, which can both promote host pathogenesis by triggering sterile inflammation and/or restrict streptococcal infection, depending on host immune statue and infection site. Cleaves host gasdermin-A (GSDMA) in epithelial cells, promoting GSDMA activation and formation of gasdermin pores, triggering pyroptosis. Pyroptosis triggers the elimination of the infected skin cell, depriving the pathogen of its protective niche, while inducing an inflammatory response. This ultimately prevents bacterial penetration of the epithelial barrier and a subsequent systemic dissemination of the pathogen. Also mediates cleavage of the cytokine precursor interleukin-1 beta (IL1B) to its mature form, resulting in inflammation and septic shock. SpeB-mediated maturation of IL1B plays a dual role depending on infection site: while IL1B inflammatory response prevents bacterial growth during invasive skin infections, it promotes streptococcal infection of the nasopharynx by disrupting colonization resistance mediated by the microbiota. Inhibits host autophagy be catalyzing cleavage and inactivation of key autophagy factors, such as CALCOCO2, NBR1 and SQSTM1. Cleaves and inhibits a number of complement factors, such as C2, C3-beta chain of C3, C4, C5 or SERPING1, thereby promoting evasion of host immunity. May also impair adaptive immunity by catalyzing cleavage and degradation of host immunoglobulins to promote immune system evasion; the relevance of this activity is however unsure in vivo. Catalyzes maturation and release of the peptide hormone bradykinin from the precursor Kininogen-1 (KNG1) to produce hypotension during septic shock. Also involved in bacterial translocation across the host epithelial barrier by mediating cleavage and degradation of host epithelial junction proteins, such as CDH1 and OCLN. Additionally, has been involved in degradation of fibronectin and vitronectin, two host extracellular matrix proteins involved in tissue integrity. Also able to catalyze cleavage and degradation of streptococcal proteins, such as C5a peptidase, EndoS or SmeZ. Degradation of streptococcal proteins is however strictly regulated to preserve integrity of other virulence factors. The protein is Streptopain (speB) of Streptococcus pyogenes serotype M3 (strain ATCC BAA-595 / MGAS315).